The following is a 201-amino-acid chain: Small ribosomal subunit protein uS4c (201 aa).

The tract at residues 20–43 (GLTNKRPKSRNDPTNQSSSRKISQ) is disordered. Residues 31–41 (DPTNQSSSRKI) are compositionally biased toward polar residues. The region spanning 89–157 (MRLDNIIFRL…IGKNLDLSQK (69 aa)) is the S4 RNA-binding domain.

This sequence belongs to the universal ribosomal protein uS4 family. As to quaternary structure, part of the 30S ribosomal subunit. Contacts protein S5. The interaction surface between S4 and S5 is involved in control of translational fidelity.

The protein resides in the plastid. It localises to the chloroplast. Its function is as follows. One of the primary rRNA binding proteins, it binds directly to 16S rRNA where it nucleates assembly of the body of the 30S subunit. In terms of biological role, with S5 and S12 plays an important role in translational accuracy. The sequence is that of Small ribosomal subunit protein uS4c (rps4) from Cycas taitungensis (Prince sago).